A 230-amino-acid chain; its full sequence is Glutathione S-transferase 2 (230 aa).

Residues 2–86 (AHFTLYSHAG…YLADKYDTDR (85 aa)) form the GST N-terminal domain. A GST C-terminal domain is found at 93-230 (DDPEYYKLIQ…EELAKAKEQH (138 aa)).

This sequence belongs to the GST superfamily.

It carries out the reaction RX + glutathione = an S-substituted glutathione + a halide anion + H(+). In terms of biological role, involved in the oxidative stress response and detoxification. This chain is Glutathione S-transferase 2 (gst2), found in Schizosaccharomyces pombe (strain 972 / ATCC 24843) (Fission yeast).